A 423-amino-acid chain; its full sequence is 26S proteasome regulatory subunit 6A homolog B (423 aa).

Ser-18 is subject to Phosphoserine. An ATP-binding site is contributed by 211-218 (GPPGTGKT). Glycyl lysine isopeptide (Lys-Gly) (interchain with G-Cter in ubiquitin) cross-links involve residues Lys-234, Lys-278, and Lys-415.

This sequence belongs to the AAA ATPase family. As to quaternary structure, component of the 19S regulatory particle (RP/PA700) base subcomplex of the 26S proteasome. The 26S proteasome is composed of a core protease (CP), known as the 20S proteasome, capped at one or both ends by the 19S regulatory particle (RP/PA700). The RP/PA700 complex is composed of at least 17 different subunits in two subcomplexes, the base and the lid, which form the portions proximal and distal to the 20S proteolytic core, respectively.

The protein resides in the cytoplasm. The protein localises to the nucleus. In terms of biological role, the 26S proteasome is involved in the ATP-dependent degradation of ubiquitinated proteins. The regulatory (or ATPase) complex confers ATP dependency and substrate specificity to the 26S complex. This is 26S proteasome regulatory subunit 6A homolog B (RPT5B) from Arabidopsis thaliana (Mouse-ear cress).